Here is a 307-residue protein sequence, read N- to C-terminus: Myeloid-associated differentiation marker-like protein 2 (307 aa).

MARVEL domains are found at residues 17-154 (AVTS…ARPG) and 159-303 (YMAT…RIRF). 7 consecutive transmembrane segments (helical) span residues 53 to 73 (FCVAAWGFCFALSVLVVACEF), 90 to 110 (AFAMLATLLSATAAVIYPLYF), 129 to 149 (LAASVFAGLLFLAYATEVALT), 163 to 183 (VSGLLKIVQAFVACIIFGALV), 198 to 218 (VAVYSLCFLATVVVVILSVLG), 232 to 252 (VVYTFLAVLLYLSAAVIWPVF), and 278 to 298 (LVVATFTYVNLLLYVADLAYS).

It belongs to the MAL family.

The protein resides in the membrane. The polypeptide is Myeloid-associated differentiation marker-like protein 2 (MYADML2) (Bos taurus (Bovine)).